The chain runs to 299 residues: Oxygen-dependent coproporphyrinogen-III oxidase (299 aa).

A substrate-binding site is contributed by S92. A divalent metal cation is bound by residues H96 and H106. The active-site Proton donor is the H106. 108–110 (NVR) contributes to the substrate binding site. Positions 145 and 175 each coordinate a divalent metal cation. Residues 240-275 (YVEFNLVWDRGTLFGLQTGGRTESILMSMPPLVRWE) form an important for dimerization region. Substrate is bound at residue 258–260 (GGR).

Belongs to the aerobic coproporphyrinogen-III oxidase family. In terms of assembly, homodimer. It depends on a divalent metal cation as a cofactor.

The protein localises to the cytoplasm. The enzyme catalyses coproporphyrinogen III + O2 + 2 H(+) = protoporphyrinogen IX + 2 CO2 + 2 H2O. The protein operates within porphyrin-containing compound metabolism; protoporphyrin-IX biosynthesis; protoporphyrinogen-IX from coproporphyrinogen-III (O2 route): step 1/1. Functionally, involved in the heme biosynthesis. Catalyzes the aerobic oxidative decarboxylation of propionate groups of rings A and B of coproporphyrinogen-III to yield the vinyl groups in protoporphyrinogen-IX. This Klebsiella pneumoniae (strain 342) protein is Oxygen-dependent coproporphyrinogen-III oxidase.